Here is a 292-residue protein sequence, read N- to C-terminus: Ribonuclease HIII (292 aa).

Positions 76–292 constitute an RNase H type-2 domain; that stretch reads TNLIGTDEVG…TQKAIKIAQL (217 aa). A divalent metal cation is bound by residues aspartate 82, glutamate 83, and aspartate 186.

This sequence belongs to the RNase HII family. RnhC subfamily. The cofactor is Mn(2+). Mg(2+) serves as cofactor.

It is found in the cytoplasm. It carries out the reaction Endonucleolytic cleavage to 5'-phosphomonoester.. Functionally, endonuclease that specifically degrades the RNA of RNA-DNA hybrids. The protein is Ribonuclease HIII of Lactococcus lactis subsp. lactis (strain IL1403) (Streptococcus lactis).